The sequence spans 772 residues: Mitochondrial intermediate peptidase (772 aa).

Residues 1-33 (MLARPSTTVLARRPFFRFRGCLNEPRPTKARCL) constitute a mitochondrion transit peptide. His556 is a binding site for Zn(2+). Residue Glu557 is part of the active site. His560 and His563 together coordinate Zn(2+).

The protein belongs to the peptidase M3 family. Requires Zn(2+) as cofactor.

Its subcellular location is the mitochondrion matrix. It carries out the reaction Release of an N-terminal octapeptide as second stage of processing of some proteins imported into the mitochondrion.. Its function is as follows. Cleaves proteins, imported into the mitochondrion, to their mature size. While most mitochondrial precursor proteins are processed to the mature form in one step by mitochondrial processing peptidase (MPP), the sequential cleavage by MIP of an octapeptide after initial processing by MPP is a required step for a subgroup of nuclear-encoded precursor proteins destined for the matrix or the inner membrane. This Coprinopsis scobicola (Ink cap fungus) protein is Mitochondrial intermediate peptidase (OCT1).